The chain runs to 681 residues: Sodium-dependent phosphate transporter 1 (681 aa).

6 helical membrane-spanning segments follow: residues 25–45 (NLWMLILGFIIAFVLAFSVGA), 66–86 (ACILASIFETVGSALLGAKVS), 106–126 (LMAGSVSAMFGSAVWQLVASF), 162–182 (IVMSWFVSPLLSGIMSGILFF), 201–221 (ALPIFYACTIGINLFSIMYTG), and 234–254 (GTILISVGCAVFCALIVWFFV). Positions 266-295 (VKSSPSESPLMEKKSNLKEDHEETKMAPGD) are disordered. Serine 269 and serine 273 each carry phosphoserine. Basic and acidic residues predominate over residues 275–295 (LMEKKSNLKEDHEETKMAPGD). The helical transmembrane segment at 514-534 (VSLLFQFLQILTACFGSFAHG) threads the bilayer. The interval 553 to 560 (KQEASTKA) is a. The next 3 membrane-spanning stretches (helical) occupy residues 561-581 (ATPIWLLLYGGVGICMGLWVW), 602-622 (FSIELASALTVVIASNIGLPI), and 652-672 (IFMAWFVTVPISGVISAAIMA).

The protein belongs to the inorganic phosphate transporter (PiT) (TC 2.A.20) family. In terms of tissue distribution, ubiquitously expressed.

The protein resides in the cell membrane. It catalyses the reaction 2 Na(+)(out) + phosphate(out) = 2 Na(+)(in) + phosphate(in). In terms of biological role, sodium-phosphate symporter which preferentially transports the monovalent form of phosphate with a stoichiometry of two sodium ions per phosphate ion. May play a role in extracellular matrix and cartilage calcification as well as in vascular calcification. Essential for cell proliferation but this function is independent of its phosphate transporter activity. Its function is as follows. (Microbial infection) May function as a retroviral receptor but do not confer infection susceptibility to Gibbon Ape Leukemia Virus (GaLV), Simian sarcoma-associated virus (SSAV) and Feline leukemia virus subgroup B (FeLV-B). The polypeptide is Sodium-dependent phosphate transporter 1 (Slc20a1) (Mus musculus (Mouse)).